The sequence spans 243 residues: Tegument protein UL14 homolog (243 aa).

The protein belongs to the alphaherpesvirinae HHV-1 UL14 protein family. Phosphorylated.

The protein resides in the virion tegument. The protein localises to the host cytoplasm. It is found in the host nucleus. Functionally, contributes to the nuclear transport of the viral transcriptional activator VP16 homolog during the early phase of infection. Therefore, participates indirectly in the regulation of the immediate-early gene expression. Additionally, seems to be important for efficient nuclear targeting of capsids. This chain is Tegument protein UL14 homolog (MDV026), found in Gallid herpesvirus 2 (strain Chicken/Md5/ATCC VR-987) (GaHV-2).